The chain runs to 91 residues: MARVTVEDAVNVVGNRFDLILMASRRARQLATQGKTPLVDPENDKPTVIALREIEENLITNELMDIQDRQEKHEKQTAELAAVAAIAEGRG.

It belongs to the RNA polymerase subunit omega family. As to quaternary structure, the RNAP catalytic core consists of 2 alpha, 1 beta, 1 beta' and 1 omega subunit. When a sigma factor is associated with the core the holoenzyme is formed, which can initiate transcription.

The catalysed reaction is RNA(n) + a ribonucleoside 5'-triphosphate = RNA(n+1) + diphosphate. Promotes RNA polymerase assembly. Latches the N- and C-terminal regions of the beta' subunit thereby facilitating its interaction with the beta and alpha subunits. The protein is DNA-directed RNA polymerase subunit omega of Psychromonas ingrahamii (strain DSM 17664 / CCUG 51855 / 37).